Consider the following 748-residue polypeptide: Catalase-peroxidase (748 aa).

Residues 91 to 236 (WHSAGTYRVG…LAAVQMGLIY (146 aa)) constitute a cross-link (tryptophyl-tyrosyl-methioninium (Trp-Tyr) (with M-262)). The active-site Proton acceptor is histidine 92. The segment at 201-223 (AQPVADKAGHGKEHGRTDGGRNL) is disordered. Basic and acidic residues predominate over residues 207 to 221 (KAGHGKEHGRTDGGR). The tryptophyl-tyrosyl-methioninium (Tyr-Met) (with W-91) cross-link spans 236 to 262 (YVNPEGPDGNPDPQASAHDIRETFARM). A heme b-binding site is contributed by histidine 277.

It belongs to the peroxidase family. Peroxidase/catalase subfamily. As to quaternary structure, homodimer or homotetramer. The cofactor is heme b. Formation of the three residue Trp-Tyr-Met cross-link is important for the catalase, but not the peroxidase activity of the enzyme.

It carries out the reaction H2O2 + AH2 = A + 2 H2O. The catalysed reaction is 2 H2O2 = O2 + 2 H2O. Functionally, bifunctional enzyme with both catalase and broad-spectrum peroxidase activity. This is Catalase-peroxidase from Bordetella avium (strain 197N).